A 690-amino-acid chain; its full sequence is Elongation factor G (690 aa).

The region spanning 8 to 283 is the tr-type G domain; it reads SKCRNIGIMA…AVVDYLPSPN (276 aa). GTP-binding positions include 17-24, 81-85, and 135-138; these read AHIDAGKT, DTPGH, and NKMD.

This sequence belongs to the TRAFAC class translation factor GTPase superfamily. Classic translation factor GTPase family. EF-G/EF-2 subfamily.

The protein resides in the cytoplasm. Functionally, catalyzes the GTP-dependent ribosomal translocation step during translation elongation. During this step, the ribosome changes from the pre-translocational (PRE) to the post-translocational (POST) state as the newly formed A-site-bound peptidyl-tRNA and P-site-bound deacylated tRNA move to the P and E sites, respectively. Catalyzes the coordinated movement of the two tRNA molecules, the mRNA and conformational changes in the ribosome. In Anaplasma phagocytophilum (strain HZ), this protein is Elongation factor G.